The chain runs to 906 residues: UPF0182 protein CA_C0010 (906 aa).

The next 7 helical transmembrane spans lie at 7 to 29 (IVTI…DFII), 47 to 69 (LAAI…WFYY), 96 to 118 (VAIV…VYWY), 153 to 175 (LYGV…YIVL), 208 to 230 (FAII…SFNL), 250 to 272 (LVFY…TSII), and 279 to 301 (IFVS…EIVQ). Over residues 842-862 (NSSNNQSETRTETGGTSTDSS) the composition is skewed to low complexity. Positions 842-875 (NSSNNQSETRTETGGTSTDSSNNKDKLKQAQDLY) are disordered.

It belongs to the UPF0182 family.

The protein localises to the cell membrane. This is UPF0182 protein CA_C0010 from Clostridium acetobutylicum (strain ATCC 824 / DSM 792 / JCM 1419 / IAM 19013 / LMG 5710 / NBRC 13948 / NRRL B-527 / VKM B-1787 / 2291 / W).